A 330-amino-acid polypeptide reads, in one-letter code: ADP-L-glycero-D-manno-heptose-6-epimerase (330 aa).

NADP(+) is bound by residues 11-12, 32-33, lysine 39, lysine 54, 75-79, and asparagine 92; these read FI, DN, and EGACS. Catalysis depends on tyrosine 139, which acts as the Proton acceptor. Lysine 143 provides a ligand contact to NADP(+). Asparagine 168 contacts substrate. The NADP(+) site is built by valine 169 and lysine 177. Lysine 177 (proton acceptor) is an active-site residue. Residues arginine 179, histidine 186, 200 to 203, arginine 213, and tyrosine 292 each bind substrate; that span reads FGEY.

The protein belongs to the NAD(P)-dependent epimerase/dehydratase family. HldD subfamily. Homopentamer. The cofactor is NADP(+).

The catalysed reaction is ADP-D-glycero-beta-D-manno-heptose = ADP-L-glycero-beta-D-manno-heptose. Its pathway is nucleotide-sugar biosynthesis; ADP-L-glycero-beta-D-manno-heptose biosynthesis; ADP-L-glycero-beta-D-manno-heptose from D-glycero-beta-D-manno-heptose 7-phosphate: step 4/4. Catalyzes the interconversion between ADP-D-glycero-beta-D-manno-heptose and ADP-L-glycero-beta-D-manno-heptose via an epimerization at carbon 6 of the heptose. The protein is ADP-L-glycero-D-manno-heptose-6-epimerase of Burkholderia cenocepacia (strain HI2424).